The primary structure comprises 309 residues: MTSSSTPRHRGIFPVVPTTFADTGELDLASQKRAVDFMIDAGSDGLCILANFSEQFAITDDERDVLTRTILEHVAGRVPVIVTTSHYSTQVCAARSLRAQQLGAAMVMAMPPYHGATFRVPEAQIFEFYARVSDAIAIPIMVQDAPASGTALSAPFLARMAREIEQVAYFKIETPGAANKLRELIRLGGDAIEGPWDGEEAITLLADLHAGATGAMTGGGFPDGIRPILEAWREGRHDDAYARYQAWLPLINHENRQSGILTAKALMREGGVIASERPRHPMPELHPDTRAELLAIARRLDPLVLRWAH.

Residue Lys-171 is the Schiff-base intermediate with substrate of the active site.

Belongs to the DapA family. In terms of assembly, homodimer.

It carries out the reaction 2-dehydro-3-deoxy-L-arabinonate = 2,5-dioxopentanoate + H2O. Its function is as follows. Catalyzes the dehydration of L-2-keto-3-deoxyarabonate (L-KDA) to alpha-ketoglutaric semialdehyde (alphaKGSA). Is involved in a degradation pathway of L-arabinose that allows A.brasilense to grow on L-arabinose as a sole carbon source. The polypeptide is L-2-keto-3-deoxyarabonate dehydratase (araD) (Azospirillum brasilense).